The following is a 145-amino-acid chain: Flagellar assembly factor FliW (145 aa).

The protein belongs to the FliW family. As to quaternary structure, interacts with translational regulator CsrA and flagellin(s).

The protein resides in the cytoplasm. Its function is as follows. Acts as an anti-CsrA protein, binds CsrA and prevents it from repressing translation of its target genes, one of which is flagellin. Binds to flagellin and participates in the assembly of the flagellum. This is Flagellar assembly factor FliW from Clostridium kluyveri (strain NBRC 12016).